The primary structure comprises 474 residues: tRNA-2-methylthio-N(6)-dimethylallyladenosine synthase (474 aa).

An MTTase N-terminal domain is found at 3-120; the sequence is KKLHIKTWGC…LPEMLNHVQG (118 aa). [4Fe-4S] cluster is bound by residues cysteine 12, cysteine 49, cysteine 83, cysteine 157, cysteine 161, and cysteine 164. One can recognise a Radical SAM core domain in the interval 143 to 375; the sequence is RAEGPTAFVS…QDRINQQVLQ (233 aa). Positions 378–441 constitute a TRAM domain; sequence RRMLGTVQRI…TNSLRGTVVR (64 aa).

Belongs to the methylthiotransferase family. MiaB subfamily. As to quaternary structure, monomer. The cofactor is [4Fe-4S] cluster.

It localises to the cytoplasm. The enzyme catalyses N(6)-dimethylallyladenosine(37) in tRNA + (sulfur carrier)-SH + AH2 + 2 S-adenosyl-L-methionine = 2-methylsulfanyl-N(6)-dimethylallyladenosine(37) in tRNA + (sulfur carrier)-H + 5'-deoxyadenosine + L-methionine + A + S-adenosyl-L-homocysteine + 2 H(+). Functionally, catalyzes the methylthiolation of N6-(dimethylallyl)adenosine (i(6)A), leading to the formation of 2-methylthio-N6-(dimethylallyl)adenosine (ms(2)i(6)A) at position 37 in tRNAs that read codons beginning with uridine. This is tRNA-2-methylthio-N(6)-dimethylallyladenosine synthase from Serratia proteamaculans (strain 568).